We begin with the raw amino-acid sequence, 426 residues long: Histidinol dehydrogenase (426 aa).

Positions 125, 187, and 210 each coordinate NAD(+). Residues Ser233, Gln255, and His258 each contribute to the substrate site. Positions 255 and 258 each coordinate Zn(2+). Catalysis depends on proton acceptor residues Glu323 and His324. Residues His324, Asp357, Glu411, and His416 each coordinate substrate. Zn(2+) is bound at residue Asp357. Zn(2+) is bound at residue His416.

This sequence belongs to the histidinol dehydrogenase family. Zn(2+) serves as cofactor.

The enzyme catalyses L-histidinol + 2 NAD(+) + H2O = L-histidine + 2 NADH + 3 H(+). It functions in the pathway amino-acid biosynthesis; L-histidine biosynthesis; L-histidine from 5-phospho-alpha-D-ribose 1-diphosphate: step 9/9. Catalyzes the sequential NAD-dependent oxidations of L-histidinol to L-histidinaldehyde and then to L-histidine. The sequence is that of Histidinol dehydrogenase (hisD) from Methanothermobacter thermautotrophicus (strain ATCC 29096 / DSM 1053 / JCM 10044 / NBRC 100330 / Delta H) (Methanobacterium thermoautotrophicum).